Here is a 720-residue protein sequence, read N- to C-terminus: MKSLHVAANAGDLAEDCGILGGDADDTVLMDGIDEVGREIWLDDHGGDNNHVHGHQDDDLIVHHDPSIFYGDLPTLPDFPCMSSSSSSSTSPAPVNAIVSSASSSSAASSSTSSAASWAILRSDGEDPTPNQNQYASGNCDDSSGALQSTASMEIPLDSSQGFGCGEGGGDCIDMMETFGYMDLLDSNEFFDTSAIFSQDDDTQNPNLMDQTLERQEDQVVVPMMENNSGGDMQMMNSSLEQDDDLAAVFLEWLKNNKETVSAEDLRKVKIKKATIESAARRLGGGKEAMKQLLKLILEWVQTNHLQRRRTTTTTTNLSYQQSFQQDPFQNPNPNNNNLIPPSDQTCFSPSTWVPPPPQQQAFVSDPGFGYMPAPNYPPQPEFLPLLESPPSWPPPPQSGPMPHQQFPMPPTSQYNQFGDPTGFNGYNMNPYQYPYVPAGQMRDQRLLRLCSSATKEARKKRMARQRRFLSHHHRHNNNNNNNNNNQQNQTQIGETCAAVAPQLNPVATTATGGTWMYWPNVPAVPPQLPPVMETQLPTMDRAGSASAMPRQQVVPDRRQGWKPEKNLRFLLQKVLKQSDVGNLGRIVLPKKEAETHLPELEARDGISLAMEDIGTSRVWNMRYRFWPNNKSRMYLLENTGDFVKTNGLQEGDFIVIYSDVKCGKYLIRGVKVRQPSGQKPEAPPSSAATKRQNKSQRNINNNSPSANVVVASPTSQTVK.

2 disordered regions span residues 122–146 and 324–360; these read RSDG…SSGA and FQQD…PPQQ. The span at 129 to 146 shows a compositional bias: polar residues; the sequence is TPNQNQYASGNCDDSSGA. Over residues 324–344 the composition is skewed to low complexity; the sequence is FQQDPFQNPNPNNNNLIPPSD. A DNA-binding region (TF-B3) is located at residues 572–674; the sequence is LQKVLKQSDV…KYLIRGVKVR (103 aa). The disordered stretch occupies residues 675-720; it reads QPSGQKPEAPPSSAATKRQNKSQRNINNNSPSANVVVASPTSQTVK. Positions 687–700 are enriched in polar residues; sequence SAATKRQNKSQRNI. A compositionally biased stretch (low complexity) spans 701 to 714; the sequence is NNNSPSANVVVASP.

As to quaternary structure, interacts (via C-terminus) with SPK1, SCAR3, ABI5, APRR1, AIP2, AIP3 and AIP4. Binds to BZIP10 and BZIP25 and forms complexes made of ABI3, BZIP53 and BZIP25 or BZIP10. In terms of processing, ubiquitinated by AIP2. Ubiquitination probably leads to its subsequent degradation, thus negatively regulating ABA signaling. As to expression, isoform 2 accumulates only at the end of seed maturation.

It localises to the nucleus. The protein localises to the cytoplasm. Functionally, participates in abscisic acid-regulated gene expression during seed development. Regulates the transcription of SGR1 and SGR2 that are involved in leaf and embryo degreening. This is B3 domain-containing transcription factor ABI3 (ABI3) from Arabidopsis thaliana (Mouse-ear cress).